The sequence spans 171 residues: Translation initiation factor IF-3 (171 aa).

The protein belongs to the IF-3 family. In terms of assembly, monomer.

The protein resides in the cytoplasm. IF-3 binds to the 30S ribosomal subunit and shifts the equilibrium between 70S ribosomes and their 50S and 30S subunits in favor of the free subunits, thus enhancing the availability of 30S subunits on which protein synthesis initiation begins. This is Translation initiation factor IF-3 from Listeria innocua serovar 6a (strain ATCC BAA-680 / CLIP 11262).